The chain runs to 501 residues: Aluminum-activated malate transporter 2 (501 aa).

Helical transmembrane passes span 22-42 (VVHA…YYYQ), 52-72 (AMWA…ATLG), 78-98 (AVAT…ASLS), 101-121 (TVEP…STFV), 130-150 (RYDY…VSGF), and 166-186 (VIMG…VWAG). The interval 398 to 425 (FKNKKKPSKSNSGSIGQAMPNKSHDDDD) is disordered.

It belongs to the aromatic acid exporter (TC 2.A.85) family.

Its subcellular location is the membrane. Malate transporter. In Arabidopsis thaliana (Mouse-ear cress), this protein is Aluminum-activated malate transporter 2 (ALMT2).